Consider the following 1943-residue polypeptide: Sickle tail protein homolog (1943 aa).

2 disordered regions span residues 1 to 79 (MEEN…KEIL) and 112 to 177 (QERL…RSTN). Residues 38-47 (AECRRTKERL) show a composition bias toward basic and acidic residues. The segment covering 48 to 62 (SNGNSRGSVSKSSRN) has biased composition (polar residues). A Phosphoserine modification is found at S169. Y244 bears the Phosphotyrosine mark. The interval 290 to 331 (ARGDGPGAPRPGSTAHPPHAIPNSPPSTPVPHSMPPSPSRIP) is disordered. Pro residues predominate over residues 308–328 (HAIPNSPPSTPVPHSMPPSPS). S357 carries O-linked (GlcNAc) serine glycosylation. Residues S361 and S365 each carry the phosphoserine modification. Y393 carries the phosphotyrosine modification. Positions 456-476 (RKYPDSHLPTLGSKTPPASPH) are disordered. T470 carries the post-translational modification Phosphothreonine. Phosphoserine is present on residues S474 and S526. 2 coiled-coil regions span residues 557 to 581 (RETRERMQAMEKQIASLTGLVQSAL) and 644 to 685 (MSLL…ELEI). Position 809 is a phosphoserine (S809). A disordered region spans residues 848–874 (VLKSQEEAAHTSGQPFHSTGAPGDAKS). Residues 957 to 985 (SAKNRAVSIEKAEKKWEEKRQNLDHYNGK) are a coiled coil. Disordered stretches follow at residues 1003–1230 (PNLE…SDAS), 1305–1329 (KTKEMEKQNTDKCHVSSHTRLTESS), and 1352–1377 (PKEARHANVNPNEDGESSSSSPTEEN). Phosphoserine is present on residues S1027, S1030, S1033, and S1044. Residues 1044 to 1053 (SPPPPPPPPR) are compositionally biased toward pro residues. 3 stretches are compositionally biased toward basic and acidic residues: residues 1155 to 1167 (EPSRADSHVKDTR), 1174 to 1192 (PKEKKNLEFFHEDVRKSDV), and 1305 to 1318 (KTKEMEKQNTDKCH). The segment covering 1368–1377 (SSSSSPTEEN) has biased composition (polar residues). Residue S1461 is modified to Phosphoserine. Residues 1464-1490 (FEECDEELERMMMEEKIEEEEEEENGD) are a coiled coil. Disordered regions lie at residues 1481 to 1572 (EEEE…PKKK), 1606 to 1660 (EEEE…EIRK), and 1677 to 1943 (ENTI…KETS). 2 stretches are compositionally biased toward polar residues: residues 1491 to 1501 (SVVQNNNTSQM) and 1512 to 1533 (RTGQQVETKSQPHSLATETRNP). Basic and acidic residues-rich tracts occupy residues 1539 to 1548 (NRTELNKFSH) and 1612 to 1625 (GTLKQHKEAKRFEI). Positions 1643–1653 (QPSIESTSPIS) are enriched in polar residues. Positions 1656–1686 (DEIRKNTYRTLDSLEQTIKQLENTISEMSPK) form a coiled coil. Polar residues-rich tracts occupy residues 1691 to 1706 (TSCSSNRDSVASSSHI) and 1731 to 1747 (IPSASRKGSSGAPQTSR). A Phosphoserine modification is found at S1739. The span at 1763–1775 (KPGKQSKLQDPRQ) shows a compositional bias: basic and acidic residues. Residues 1806-1825 (SPSSGKSSSLPSSSGDSSNL) are compositionally biased toward low complexity. Polar residues-rich tracts occupy residues 1834-1843 (SIASNPLSPQ) and 1853-1869 (LIPSVSNGSLKFQSLTH). S1841 is subject to Phosphoserine. The span at 1892–1905 (SFSSSPPSPASSVS) shows a compositional bias: low complexity. S1896, S1899, and S1902 each carry phosphoserine. Residues 1906-1943 (LNQGAKGTRTIHTPSLTSYKAQNGSSSKATPSTAKETS) show a composition bias toward polar residues.

Interacts with CPNE4 (via VWFA domain).

The protein localises to the cytoplasm. It localises to the cytoskeleton. Its subcellular location is the microtubule organizing center. The protein resides in the centrosome. In terms of biological role, required for normal development of intervertebral disks. The polypeptide is Sickle tail protein homolog (KIAA1217) (Homo sapiens (Human)).